Reading from the N-terminus, the 205-residue chain is Putative 3-methyladenine DNA glycosylase (205 aa).

Belongs to the DNA glycosylase MPG family.

This Bacillus cereus (strain ZK / E33L) protein is Putative 3-methyladenine DNA glycosylase.